A 970-amino-acid polypeptide reads, in one-letter code: N-alpha-acetyltransferase 25, NatB auxiliary subunit (970 aa).

TPR repeat units lie at residues 11–44 (NDRR…HRDL), 45–78 (HCAK…EPTD), 79–112 (DNSL…VPNS), and 114–146 (EYHS…VPKN).

This sequence belongs to the MDM20/NAA25 family. Component of the N-terminal acetyltransferase B (NatB) complex which is composed of NAA20 and NAA25.

The protein resides in the cytoplasm. Its function is as follows. Non-catalytic subunit of the NatB complex which catalyzes acetylation of the N-terminal methionine residues of peptides beginning with Met-Asp, Met-Glu, Met-Asn and Met-Gln. May play a role in normal cell-cycle progression. The polypeptide is N-alpha-acetyltransferase 25, NatB auxiliary subunit (Naa25) (Rattus norvegicus (Rat)).